The following is a 707-amino-acid chain: Caprin-1 (707 aa).

Composition is skewed to low complexity over residues 1-15 (MPSATSHSGSGSKSS) and 22-43 (GSSGSEAAAGAAAPASQHPATG). The interval 1–48 (MPSATSHSGSGSKSSGPPPPSGSSGSEAAAGAAAPASQHPATGTGAVQ) is disordered. P2 is modified (N-acetylproline). S10 bears the Phosphoserine mark. Residues 58 to 92 (VIDKKLRNLEKKKGKLDDYQERMNKGERLNQDQLD) are a coiled coil. S113 carries the post-translational modification Phosphoserine. The stretch at 123-151 (KTIKKTARREQLMREEAEQKRLKTVLELQ) forms a coiled coil. R163 carries the post-translational modification Omega-N-methylarginine. Residues 325-347 (LQQQPQAASPSVPEPHSLTPVAQ) are disordered. Over residues 326-335 (QQQPQAASPS) the composition is skewed to low complexity. Phosphoserine occurs at positions 333 and 341. A G3BP1-binding region spans residues 358–379 (QDLMAQMQGPYNFIQDSMLDFE). Disordered stretches follow at residues 412 to 443 (ESRLAQSNQVPVQPEATQVPLVSSTSEGYTAS), 523 to 558 (PVPPVNEPETLKQQSQYQASYNQSFSSQPHQVEQTE), and 570 to 620 (TYHG…RGLM). Over residues 431–443 (PLVSSTSEGYTAS) the composition is skewed to polar residues. Positions 535 to 558 (QQSQYQASYNQSFSSQPHQVEQTE) are enriched in low complexity. A compositionally biased stretch (polar residues) spans 572–603 (HGSQDQPHQVPGNHQQPPQQSTGFPRSSQPYY). Phosphotyrosine is present on Y623. Omega-N-methylarginine is present on residues R624 and R631. 2 positions are modified to phosphotyrosine: Y634 and Y637. R638 bears the Omega-N-methylarginine mark. Polar residues predominate over residues 641-655 (FSNTPNSGYTQSQFN). The segment at 641–707 (FSNTPNSGYT…MPQMNTQQVN (67 aa)) is disordered. O-linked (GlcNAc) serine glycans are attached at residues S642 and S647. Residues Y649, Y660, Y663, and Y668 each carry the phosphotyrosine modification. 2 stretches are compositionally biased toward low complexity: residues 674 to 684 (RGSGQSGPRGA) and 695 to 707 (NRGMPQMNTQQVN). Residue R696 is modified to Asymmetric dimethylarginine; alternate. R696 carries the omega-N-methylarginine; alternate modification.

Belongs to the caprin family. As to quaternary structure, may form homomultimers. Interacts with G3BP1; interaction is direct and promotes stress granule formation. Interacts with G3BP2; interaction is direct and promotes stress granule formation. Interacts with PQBP1. Interacts with DDX3X. Interacts (when phosphorylated by EPHA4) with FMR1; interaction with FMR1 promotes formation of a membraneless compartment. In terms of processing, tyrosine phosphorylation by EPHA4 promotes interaction with FMR1 and liquid-liquid phase separation (LLPS) for the formation of a membraneless compartment that concentrates mRNAs with associated regulatory factors. O-glycosylated (O-GlcNAcylated), in a cell cycle-dependent manner. O-glycosylation by OGT inhibit ability to undergo liquid-liquid phase separation (LLPS). As to expression, expressed in hippocampal and neocortical pyramidal neurons, but not in Purkinje cells.

It is found in the cytoplasm. The protein resides in the cytoplasmic ribonucleoprotein granule. The protein localises to the cytosol. Its subcellular location is the cell projection. It localises to the dendrite. It is found in the lamellipodium. Its activity is regulated as follows. Ability to mediate liquid-liquid phase separation is regulated by ATP: moderate concentrations of ATP enhance phase separation, whereas high concentrations of ATP lead to inhibition of phase separation. In terms of biological role, mRNA-binding protein that acts as a regulator of mRNAs transport, translation and/or stability, and which is involved in neurogenesis, synaptic plasticity in neurons and cell proliferation and migration in multiple cell types. Plays an essential role in cytoplasmic stress granule formation. Acts as an mRNA regulator by mediating formation of some phase-separated membraneless compartment: undergoes liquid-liquid phase separation upon binding to target mRNAs, leading to assemble mRNAs into cytoplasmic ribonucleoprotein granules that concentrate mRNAs with associated regulatory factors. Undergoes liquid-liquid phase separation following phosphorylation and interaction with FMR1, promoting formation of cytoplasmic ribonucleoprotein granules that concentrate mRNAs with factors that inhibit translation and mediate deadenylation of target mRNAs. In these cytoplasmic ribonucleoprotein granules, CAPRIN1 mediates recruitment of CNOT7 deadenylase, leading to mRNA deadenylation and degradation. Binds directly and selectively to MYC and CCND2 mRNAs. In neuronal cells, directly binds to several mRNAs associated with RNA granules, including BDNF, CAMK2A, CREB1, MAP2, NTRK2 mRNAs, as well as to GRIN1 and KPNB1 mRNAs, but not to rRNAs. This chain is Caprin-1 (Caprin1), found in Rattus norvegicus (Rat).